Reading from the N-terminus, the 129-residue chain is MRSSSPSQPPSIKKAHRQAKKRAIRRRRIDLDCGCSIYFHIDCAGHGFTHRGAHHCTSGREWRVYLGDRKSPLFQDKPSRGHAIHQDQDIQRPNPVQPQPQESIGSPQSIPELPSLDDIDDSFWVELFS.

Over residues 1–12 (MRSSSPSQPPSI) the composition is skewed to low complexity. The disordered stretch occupies residues 1–23 (MRSSSPSQPPSIKKAHRQAKKRA). The segment covering 13 to 23 (KKAHRQAKKRA) has biased composition (basic residues). The short motif at 13–28 (KKAHRQAKKRAIRRRR) is the Nuclear localization signal element. A zinc finger spans residues 33–50 (CGCSIYFHIDCAGHGFTH). A disordered region spans residues 73 to 117 (LFQDKPSRGHAIHQDQDIQRPNPVQPQPQESIGSPQSIPELPSLD). Polar residues predominate over residues 99 to 109 (QPQESIGSPQS). The interval 115–129 (SLDDIDDSFWVELFS) is transactivation.

Belongs to the geminiviridae transcriptional activator protein family. Monomer. Homodimer. Homooligomer. Self-interaction correlates with nuclear localization and efficient activation of transcription. Monomers suppress local silencing by interacting with and inactivating host adenosine kinase 2 (ADK2) in the cytoplasm. Interacts with and inhibits host SNF1 kinase. Binds to ssDNA. In terms of processing, phosphorylated.

Its subcellular location is the host nucleus. The protein resides in the host cytoplasm. Its function is as follows. Strong activator of the late viral genes promoters. Enhances the expression of the capsid protein and nuclear shuttle protein. Acts as a suppressor of RNA-mediated gene silencing, also known as post-transcriptional gene silencing (PTGS), a mechanism of plant viral defense that limits the accumulation of viral RNAs. Suppresses the host RNA silencing by inhibiting adenosine kinase 2 (ADK2), a kinase involved in a general methylation pathway. Also suppresses the host basal defense by interacting with and inhibiting SNF1 kinase, a key regulator of cell metabolism implicated in innate antiviral defense. Determines pathogenicity. In Solanum tuberosum (Potato), this protein is Transcriptional activator protein.